Consider the following 272-residue polypeptide: 3-methyl-2-oxobutanoate hydroxymethyltransferase (272 aa).

Mg(2+) contacts are provided by Asp-43 and Asp-82. 3-methyl-2-oxobutanoate is bound by residues Asp-43 to Ser-44, Asp-82, and Lys-112. Residue Glu-114 coordinates Mg(2+). Glu-179 acts as the Proton acceptor in catalysis.

This sequence belongs to the PanB family. As to quaternary structure, homodecamer; pentamer of dimers. Mg(2+) is required as a cofactor.

It localises to the cytoplasm. It carries out the reaction 3-methyl-2-oxobutanoate + (6R)-5,10-methylene-5,6,7,8-tetrahydrofolate + H2O = 2-dehydropantoate + (6S)-5,6,7,8-tetrahydrofolate. It functions in the pathway cofactor biosynthesis; (R)-pantothenate biosynthesis; (R)-pantoate from 3-methyl-2-oxobutanoate: step 1/2. Functionally, catalyzes the reversible reaction in which hydroxymethyl group from 5,10-methylenetetrahydrofolate is transferred onto alpha-ketoisovalerate to form ketopantoate. This Staphylococcus aureus (strain Mu3 / ATCC 700698) protein is 3-methyl-2-oxobutanoate hydroxymethyltransferase.